Here is a 307-residue protein sequence, read N- to C-terminus: Glutaminase (307 aa).

Substrate contacts are provided by Ser66, Asn116, Glu160, Asn167, Tyr191, Tyr243, and Val261.

It belongs to the glutaminase family. Homotetramer.

The catalysed reaction is L-glutamine + H2O = L-glutamate + NH4(+). This is Glutaminase from Saccharophagus degradans (strain 2-40 / ATCC 43961 / DSM 17024).